The following is an 853-amino-acid chain: DNA topoisomerase 1 (853 aa).

Residues 3-136 (KSLVIVESPV…KFRRVVFNEI (134 aa)) form the Toprim domain. Residues E9 and D105 each contribute to the Mg(2+) site. The 414-residue stretch at 152 to 565 (NMNRVYSQQA…SFFDNFSQQL (414 aa)) folds into the Topo IA-type catalytic domain. The segment at 186–191 (SAGRVQ) is interaction with DNA. Y313 functions as the O-(5'-phospho-DNA)-tyrosine intermediate in the catalytic mechanism. 3 C4-type zinc fingers span residues 589–621 (CSLCNKKMGIKTAVTGVFLSCLGYNSEPNEKRC), 649–676 (CKKCNLVMDVYLINENLKIFICINNPSC), and 699–724 (CEKCKNDMLFKTGRFGNFFMCINDTC).

The protein belongs to the type IA topoisomerase family. In terms of assembly, monomer. Mg(2+) serves as cofactor.

The enzyme catalyses ATP-independent breakage of single-stranded DNA, followed by passage and rejoining.. In terms of biological role, releases the supercoiling and torsional tension of DNA, which is introduced during the DNA replication and transcription, by transiently cleaving and rejoining one strand of the DNA duplex. Introduces a single-strand break via transesterification at a target site in duplex DNA. The scissile phosphodiester is attacked by the catalytic tyrosine of the enzyme, resulting in the formation of a DNA-(5'-phosphotyrosyl)-enzyme intermediate and the expulsion of a 3'-OH DNA strand. The free DNA strand then undergoes passage around the unbroken strand, thus removing DNA supercoils. Finally, in the religation step, the DNA 3'-OH attacks the covalent intermediate to expel the active-site tyrosine and restore the DNA phosphodiester backbone. This Buchnera aphidicola subsp. Schizaphis graminum (strain Sg) protein is DNA topoisomerase 1.